The primary structure comprises 122 residues: UPF0382 membrane protein SE_0353 (122 aa).

Helical transmembrane passes span 3–23 (VFIILGALNAMMAVGTGAFGA), 46–66 (MYHGLGLLVIGLISGTTSINV), 69–89 (AGWLLFFGIVFFSGSLYFLAL), and 98–118 (ITPIGGVLFIIGWLVLVIATL).

It belongs to the UPF0382 family.

The protein localises to the cell membrane. This is UPF0382 membrane protein SE_0353 from Staphylococcus epidermidis (strain ATCC 12228 / FDA PCI 1200).